Reading from the N-terminus, the 211-residue chain is Pyridoxine/pyridoxamine 5'-phosphate oxidase (211 aa).

Substrate contacts are provided by residues 7-10 (RREY) and Lys65. FMN contacts are provided by residues 60 to 65 (RIVLLK), 75 to 76 (YT), Arg81, Lys82, and Gln104. Substrate contacts are provided by Tyr122, Arg126, and Ser130. FMN is bound by residues 139-140 (QS) and Trp184. 190 to 192 (RLH) serves as a coordination point for substrate. Position 194 (Arg194) interacts with FMN.

Belongs to the pyridoxamine 5'-phosphate oxidase family. As to quaternary structure, homodimer. It depends on FMN as a cofactor.

The catalysed reaction is pyridoxamine 5'-phosphate + O2 + H2O = pyridoxal 5'-phosphate + H2O2 + NH4(+). The enzyme catalyses pyridoxine 5'-phosphate + O2 = pyridoxal 5'-phosphate + H2O2. Its pathway is cofactor metabolism; pyridoxal 5'-phosphate salvage; pyridoxal 5'-phosphate from pyridoxamine 5'-phosphate: step 1/1. It functions in the pathway cofactor metabolism; pyridoxal 5'-phosphate salvage; pyridoxal 5'-phosphate from pyridoxine 5'-phosphate: step 1/1. Functionally, catalyzes the oxidation of either pyridoxine 5'-phosphate (PNP) or pyridoxamine 5'-phosphate (PMP) into pyridoxal 5'-phosphate (PLP). The sequence is that of Pyridoxine/pyridoxamine 5'-phosphate oxidase from Vibrio cholerae serotype O1 (strain ATCC 39541 / Classical Ogawa 395 / O395).